A 71-amino-acid polypeptide reads, in one-letter code: Small ribosomal subunit protein bS18 (71 aa).

The protein belongs to the bacterial ribosomal protein bS18 family. In terms of assembly, part of the 30S ribosomal subunit. Forms a tight heterodimer with protein bS6.

In terms of biological role, binds as a heterodimer with protein bS6 to the central domain of the 16S rRNA, where it helps stabilize the platform of the 30S subunit. This is Small ribosomal subunit protein bS18 from Nostoc sp. (strain PCC 7120 / SAG 25.82 / UTEX 2576).